An 85-amino-acid polypeptide reads, in one-letter code: MRTKAEIIKEFGKSEADTGSTEVQIALLTEKINHLTEHLRVHKKDFHSRLGLLKMVGQRKRLLAYLTKKDLEGYRALIAKLGIRK.

Belongs to the universal ribosomal protein uS15 family. As to quaternary structure, part of the 30S ribosomal subunit. Forms a bridge to the 50S subunit in the 70S ribosome, contacting the 23S rRNA.

In terms of biological role, one of the primary rRNA binding proteins, it binds directly to 16S rRNA where it helps nucleate assembly of the platform of the 30S subunit by binding and bridging several RNA helices of the 16S rRNA. Functionally, forms an intersubunit bridge (bridge B4) with the 23S rRNA of the 50S subunit in the ribosome. The chain is Small ribosomal subunit protein uS15 from Fusobacterium nucleatum subsp. nucleatum (strain ATCC 25586 / DSM 15643 / BCRC 10681 / CIP 101130 / JCM 8532 / KCTC 2640 / LMG 13131 / VPI 4355).